The sequence spans 224 residues: Glutathione peroxidase 3 (224 aa).

A signal peptide spans M1–G18. A glycan (N-linked (GlcNAc...) asparagine) is linked at N38. Residue C73 is part of the active site.

It belongs to the glutathione peroxidase family.

The protein resides in the secreted. It localises to the extracellular space. It carries out the reaction 2 glutathione + H2O2 = glutathione disulfide + 2 H2O. This is Glutathione peroxidase 3 (gpx-3) from Caenorhabditis elegans.